We begin with the raw amino-acid sequence, 468 residues long: Methylenetetrahydrofolate--tRNA-(uracil-5-)-methyltransferase TrmFO (468 aa).

10–15 (GGGLAG) is an FAD binding site.

The protein belongs to the MnmG family. TrmFO subfamily. It depends on FAD as a cofactor.

It is found in the cytoplasm. It catalyses the reaction uridine(54) in tRNA + (6R)-5,10-methylene-5,6,7,8-tetrahydrofolate + NADH + H(+) = 5-methyluridine(54) in tRNA + (6S)-5,6,7,8-tetrahydrofolate + NAD(+). It carries out the reaction uridine(54) in tRNA + (6R)-5,10-methylene-5,6,7,8-tetrahydrofolate + NADPH + H(+) = 5-methyluridine(54) in tRNA + (6S)-5,6,7,8-tetrahydrofolate + NADP(+). Its function is as follows. Catalyzes the folate-dependent formation of 5-methyl-uridine at position 54 (M-5-U54) in all tRNAs. In Chelativorans sp. (strain BNC1), this protein is Methylenetetrahydrofolate--tRNA-(uracil-5-)-methyltransferase TrmFO.